The following is a 1203-amino-acid chain: DNA-directed RNA polymerase subunit beta' (1203 aa).

Cys-60, Cys-62, Cys-75, and Cys-78 together coordinate Zn(2+). The Mg(2+) site is built by Asp-449, Asp-451, and Asp-453. 4 residues coordinate Zn(2+): Cys-818, Cys-892, Cys-899, and Cys-902.

It belongs to the RNA polymerase beta' chain family. In terms of assembly, the RNAP catalytic core consists of 2 alpha, 1 beta, 1 beta' and 1 omega subunit. When a sigma factor is associated with the core the holoenzyme is formed, which can initiate transcription. Requires Mg(2+) as cofactor. Zn(2+) is required as a cofactor.

It catalyses the reaction RNA(n) + a ribonucleoside 5'-triphosphate = RNA(n+1) + diphosphate. In terms of biological role, DNA-dependent RNA polymerase catalyzes the transcription of DNA into RNA using the four ribonucleoside triphosphates as substrates. In Bacillus mycoides (strain KBAB4) (Bacillus weihenstephanensis), this protein is DNA-directed RNA polymerase subunit beta'.